A 629-amino-acid polypeptide reads, in one-letter code: DNA ligase B (629 aa).

K151 (N6-AMP-lysine intermediate) is an active-site residue. Over residues 588 to 597 (LQKQHGTNTR) the composition is skewed to polar residues. The interval 588–629 (LQKQHGTNTRNEQKGDVRRVDVKQDNGTTWLPEQDSNLRPND) is disordered. A compositionally biased stretch (basic and acidic residues) spans 598 to 611 (NEQKGDVRRVDVKQ). The segment covering 612–629 (DNGTTWLPEQDSNLRPND) has biased composition (polar residues).

This sequence belongs to the NAD-dependent DNA ligase family. LigB subfamily.

The enzyme catalyses NAD(+) + (deoxyribonucleotide)n-3'-hydroxyl + 5'-phospho-(deoxyribonucleotide)m = (deoxyribonucleotide)n+m + AMP + beta-nicotinamide D-nucleotide.. Functionally, catalyzes the formation of phosphodiester linkages between 5'-phosphoryl and 3'-hydroxyl groups in double-stranded DNA using NAD as a coenzyme and as the energy source for the reaction. The chain is DNA ligase B from Chromohalobacter salexigens (strain ATCC BAA-138 / DSM 3043 / CIP 106854 / NCIMB 13768 / 1H11).